The primary structure comprises 347 residues: S-adenosylmethionine:tRNA ribosyltransferase-isomerase (347 aa).

This sequence belongs to the QueA family. As to quaternary structure, monomer.

It is found in the cytoplasm. It carries out the reaction 7-aminomethyl-7-carbaguanosine(34) in tRNA + S-adenosyl-L-methionine = epoxyqueuosine(34) in tRNA + adenine + L-methionine + 2 H(+). It participates in tRNA modification; tRNA-queuosine biosynthesis. Functionally, transfers and isomerizes the ribose moiety from AdoMet to the 7-aminomethyl group of 7-deazaguanine (preQ1-tRNA) to give epoxyqueuosine (oQ-tRNA). The polypeptide is S-adenosylmethionine:tRNA ribosyltransferase-isomerase (Bordetella pertussis (strain Tohama I / ATCC BAA-589 / NCTC 13251)).